The chain runs to 429 residues: Adenylosuccinate synthetase (429 aa).

GTP-binding positions include 12–18 and 40–42; these read GDEGKGK and GHT. Aspartate 13 serves as the catalytic Proton acceptor. Positions 13 and 40 each coordinate Mg(2+). IMP contacts are provided by residues 13-16, 38-41, threonine 128, arginine 142, glutamine 223, threonine 238, and arginine 302; these read DEGK and NAGH. Histidine 41 acts as the Proton donor in catalysis. 298–304 serves as a coordination point for substrate; that stretch reads VNTGRPR. Residues arginine 304, 330 to 332, and 412 to 414 each bind GTP; these read KLD and GVG.

Belongs to the adenylosuccinate synthetase family. As to quaternary structure, homodimer. The cofactor is Mg(2+).

It localises to the cytoplasm. It catalyses the reaction IMP + L-aspartate + GTP = N(6)-(1,2-dicarboxyethyl)-AMP + GDP + phosphate + 2 H(+). Its pathway is purine metabolism; AMP biosynthesis via de novo pathway; AMP from IMP: step 1/2. Its function is as follows. Plays an important role in the de novo pathway of purine nucleotide biosynthesis. Catalyzes the first committed step in the biosynthesis of AMP from IMP. The polypeptide is Adenylosuccinate synthetase (Corynebacterium urealyticum (strain ATCC 43042 / DSM 7109)).